Here is a 180-residue protein sequence, read N- to C-terminus: Acireductone dioxygenase (180 aa).

His-97, His-99, Glu-103, and His-141 together coordinate Fe(2+). Ni(2+)-binding residues include His-97, His-99, Glu-103, and His-141.

This sequence belongs to the acireductone dioxygenase (ARD) family. As to quaternary structure, monomer. Fe(2+) serves as cofactor. Ni(2+) is required as a cofactor.

It catalyses the reaction 1,2-dihydroxy-5-(methylsulfanyl)pent-1-en-3-one + O2 = 3-(methylsulfanyl)propanoate + CO + formate + 2 H(+). The catalysed reaction is 1,2-dihydroxy-5-(methylsulfanyl)pent-1-en-3-one + O2 = 4-methylsulfanyl-2-oxobutanoate + formate + 2 H(+). It participates in amino-acid biosynthesis; L-methionine biosynthesis via salvage pathway; L-methionine from S-methyl-5-thio-alpha-D-ribose 1-phosphate: step 5/6. In terms of biological role, catalyzes 2 different reactions between oxygen and the acireductone 1,2-dihydroxy-3-keto-5-methylthiopentene (DHK-MTPene) depending upon the metal bound in the active site. Fe-containing acireductone dioxygenase (Fe-ARD) produces formate and 2-keto-4-methylthiobutyrate (KMTB), the alpha-ketoacid precursor of methionine in the methionine recycle pathway. Ni-containing acireductone dioxygenase (Ni-ARD) produces methylthiopropionate, carbon monoxide and formate, and does not lie on the methionine recycle pathway. This chain is Acireductone dioxygenase, found in Acidiphilium cryptum (strain JF-5).